Consider the following 484-residue polypeptide: Glutamate--tRNA ligase (484 aa).

Positions 11–21 (PSPTGYLHIGN) match the 'HIGH' region motif. The short motif at 252 to 256 (KLSKR) is the 'KMSKS' region element. Residue Lys255 participates in ATP binding.

This sequence belongs to the class-I aminoacyl-tRNA synthetase family. Glutamate--tRNA ligase type 1 subfamily. As to quaternary structure, monomer.

Its subcellular location is the cytoplasm. It carries out the reaction tRNA(Glu) + L-glutamate + ATP = L-glutamyl-tRNA(Glu) + AMP + diphosphate. Catalyzes the attachment of glutamate to tRNA(Glu) in a two-step reaction: glutamate is first activated by ATP to form Glu-AMP and then transferred to the acceptor end of tRNA(Glu). The protein is Glutamate--tRNA ligase of Staphylococcus aureus (strain COL).